Reading from the N-terminus, the 615-residue chain is Chaperone protein HscA (615 aa).

It belongs to the heat shock protein 70 family.

Chaperone involved in the maturation of iron-sulfur cluster-containing proteins. Has a low intrinsic ATPase activity which is markedly stimulated by HscB. Involved in the maturation of IscU. The chain is Chaperone protein HscA from Xenorhabdus nematophila (strain ATCC 19061 / DSM 3370 / CCUG 14189 / LMG 1036 / NCIMB 9965 / AN6).